An 817-amino-acid chain; its full sequence is Myosin-A (817 aa).

Phosphoserine is present on Ser-19. A Myosin motor domain is found at 97–771; the sequence is MSFGDIGLLN…GAKMLSKIQR (675 aa). ATP is bound at residue 191–198; the sequence is GESGAGKT. The segment at 661-671 is actin-binding; sequence PHFIRCIKPNE. The segment at 773 to 817 is tail; that stretch reads KLVEWENCVSVIEAAIMKYKHKQNVENNVSSLMRVQAHIRKRMVA.

Belongs to the TRAFAC class myosin-kinesin ATPase superfamily. Myosin family. In terms of assembly, interacts with ACT1.

The protein localises to the cell membrane. In terms of biological role, myosins are actin-based motor molecules with ATPase activity. Unconventional myosins serve in intracellular movements. Their highly divergent tails are presumed to bind to membranous compartments, which would be moved relative to actin filaments. This chain is Myosin-A, found in Plasmodium yoelii yoelii.